We begin with the raw amino-acid sequence, 282 residues long: Homeobox protein pv.1 (282 aa).

2 stretches are compositionally biased toward basic and acidic residues: residues 17 to 26 (EEAADGKDSM) and 44 to 59 (YAKE…DVQE). The disordered stretch occupies residues 17-128 (EEAADGKDSM…HRGESPKSDL (112 aa)). Polar residues-rich tracts occupy residues 86-96 (WGSSDDFSSVG) and 103-114 (EGSPSPMRNSQE). Over residues 116-128 (ETDHRGESPKSDL) the composition is skewed to basic and acidic residues. Residues 129 to 188 (QRHLRTAFTPQQISKLEQAFNKQRYLGASERKKLATSLRLSEIQVKTWFQNRRMKLKRQI) constitute a DNA-binding region (homeobox).

Expressed in the ventral marginal zone of blastulae. At early gastrulation, expression begins to spread to the animal pole (ectoderm), and at stage 11.5 is expressed in a gradient across the animal cap, with levels highest in the ventral region. At the end of gastrulation, predominantly localized to the ventral and lateral regions of the closing slit blastopore. Also expressed at a low level in ventral endoderm.

It localises to the nucleus. In terms of biological role, transcriptional repressor. Acts in a ventral signaling pathway downstream of bmp4, which suppresses dorsal mesoderm formation and leads to both ventral mesoderm and ventral ectoderm formation. Acts in the ectoderm to simultaneously specify epidermal lineages and restrict neuralization. Represses transcription of dorsal-specific genes. Binds to DNA, with preference for the target sequences 5'-TAATGC-3' and 5'-TAATTG-3'. Acts in a pathway downstream of bmp4 and fgf to negatively regulate erythroid specification. The polypeptide is Homeobox protein pv.1 (Xenopus laevis (African clawed frog)).